The sequence spans 182 residues: Large ribosomal subunit protein uL5m (182 aa).

The protein belongs to the universal ribosomal protein uL5 family.

It is found in the mitochondrion. The chain is Large ribosomal subunit protein uL5m (RPL5) from Reclinomonas americana.